Reading from the N-terminus, the 271-residue chain is Virulence regulon transcriptional activator VirF (271 aa).

The region spanning 167–265 (ERLQKFMEEN…GCTPSQARLT (99 aa)) is the HTH araC/xylS-type domain. DNA-binding regions (H-T-H motif) lie at residues 184 to 205 (SKFAREFGMGLTTFKELFGTVY) and 232 to 255 (IVDIAMEAGFSSQSYFTQSYRRRF).

Transcriptional activator of the Yersinia virulence regulon. The polypeptide is Virulence regulon transcriptional activator VirF (virF) (Yersinia enterocolitica serotype O:8 / biotype 1B (strain NCTC 13174 / 8081)).